We begin with the raw amino-acid sequence, 259 residues long: Protein unc-50 homolog (259 aa).

Position 1 is an N-acetylmethionine (Met-1). Residues Met-1–Pro-82 lie on the Cytoplasmic side of the membrane. A Phosphoserine modification is found at Ser-6. A helical membrane pass occupies residues Ala-83–Leu-103. Residues Asp-104–Lys-112 are Lumenal-facing. Residues Leu-113–Met-133 form a helical membrane-spanning segment. Residues Trp-134–Ala-163 are Cytoplasmic-facing. The helical transmembrane segment at Phe-164 to Leu-184 threads the bilayer. Over Thr-185–Thr-187 the chain is Lumenal. Residues Phe-188–Val-208 form a helical membrane-spanning segment. Over Thr-209–Thr-222 the chain is Cytoplasmic. A helical transmembrane segment spans residues Val-223–Gly-243. Residues Trp-244–Lys-259 lie on the Lumenal side of the membrane.

This sequence belongs to the unc-50 family. In terms of tissue distribution, highly expressed in periodontal ligament and bone marrow, but not in gingival fibroblasts.

The protein resides in the nucleus inner membrane. Its subcellular location is the golgi apparatus membrane. Functionally, involved in the cell surface expression of neuronal nicotinic receptors. Binds RNA. The protein is Protein unc-50 homolog (Unc50) of Mus musculus (Mouse).